Reading from the N-terminus, the 193-residue chain is Xanthine phosphoribosyltransferase (193 aa).

Xanthine-binding residues include leucine 20 and asparagine 27. Residue 129–133 (ANGKA) participates in 5-phospho-alpha-D-ribose 1-diphosphate binding. Residue lysine 157 coordinates xanthine.

It belongs to the purine/pyrimidine phosphoribosyltransferase family. Xpt subfamily. In terms of assembly, homodimer.

The protein resides in the cytoplasm. The catalysed reaction is XMP + diphosphate = xanthine + 5-phospho-alpha-D-ribose 1-diphosphate. The protein operates within purine metabolism; XMP biosynthesis via salvage pathway; XMP from xanthine: step 1/1. Its function is as follows. Converts the preformed base xanthine, a product of nucleic acid breakdown, to xanthosine 5'-monophosphate (XMP), so it can be reused for RNA or DNA synthesis. The sequence is that of Xanthine phosphoribosyltransferase from Bifidobacterium animalis subsp. lactis (strain AD011).